Reading from the N-terminus, the 547-residue chain is Glucose-6-phosphate isomerase 1 (547 aa).

E353 (proton donor) is an active-site residue. Catalysis depends on residues H384 and K512.

The protein belongs to the GPI family.

The protein localises to the cytoplasm. The catalysed reaction is alpha-D-glucose 6-phosphate = beta-D-fructose 6-phosphate. It participates in carbohydrate biosynthesis; gluconeogenesis. The protein operates within carbohydrate degradation; glycolysis; D-glyceraldehyde 3-phosphate and glycerone phosphate from D-glucose: step 2/4. Functionally, catalyzes the reversible isomerization of glucose-6-phosphate to fructose-6-phosphate. The chain is Glucose-6-phosphate isomerase 1 from Chromobacterium violaceum (strain ATCC 12472 / DSM 30191 / JCM 1249 / CCUG 213 / NBRC 12614 / NCIMB 9131 / NCTC 9757 / MK).